Here is a 239-residue protein sequence, read N- to C-terminus: Protein GUCD1 (239 aa).

This Mus musculus (Mouse) protein is Protein GUCD1 (Gucd1).